The chain runs to 425 residues: Kynurenine/alpha-aminoadipate aminotransferase, mitochondrial (425 aa).

The N-terminal 29 residues, 1–29 (MNYSRFLTATSLARKTSPIRATVEIMSRA), are a transit peptide targeting the mitochondrion. Substrate is bound at residue arginine 20. Residue serine 40 is modified to Phosphoserine. Residues tyrosine 74 and tyrosine 142 each contribute to the substrate site. The residue at position 172 (lysine 172) is an N6-succinyllysine. At lysine 179 the chain carries N6-acetyllysine. A compositionally biased stretch (basic and acidic residues) spans 179–188 (KPEDSKDPTK). The tract at residues 179-208 (KPEDSKDPTKRTPKFLYTIPNGNNPTGNSL) is disordered. Residues 198–208 (PNGNNPTGNSL) are compositionally biased toward polar residues. Residue asparagine 202 participates in substrate binding. An N6-(pyridoxal phosphate)lysine; alternate modification is found at lysine 263. N6-acetyllysine; alternate occurs at positions 263 and 339. 2 positions are modified to N6-succinyllysine; alternate: lysine 263 and lysine 339. N6-acetyllysine is present on lysine 351. N6-acetyllysine; alternate is present on lysine 367. Lysine 367 is modified (N6-succinyllysine; alternate). Arginine 399 contributes to the substrate binding site. Lysine 422 carries the N6-acetyllysine modification.

The protein belongs to the class-I pyridoxal-phosphate-dependent aminotransferase family. As to quaternary structure, homodimer. Pyridoxal 5'-phosphate serves as cofactor. The N-terminus is blocked.

It localises to the mitochondrion. The catalysed reaction is L-kynurenine + 2-oxoglutarate = kynurenate + L-glutamate + H2O. The enzyme catalyses L-2-aminoadipate + 2-oxoglutarate = 2-oxoadipate + L-glutamate. It carries out the reaction glycine + 2-oxoglutarate = glyoxylate + L-glutamate. It catalyses the reaction L-kynurenine + glyoxylate = kynurenate + glycine + H2O. The catalysed reaction is 3-hydroxy-L-kynurenine + glyoxylate = xanthurenate + glycine + H2O. The enzyme catalyses 2-oxohexanoate + L-kynurenine = L-2-aminohexanoate + kynurenate + H2O. It carries out the reaction 3-phenylpyruvate + L-kynurenine = kynurenate + L-phenylalanine + H2O. It catalyses the reaction 4-methylsulfanyl-2-oxobutanoate + L-kynurenine = kynurenate + L-methionine + H2O. The catalysed reaction is 2-oxo-3-sulfanylpropanoate + L-kynurenine = kynurenate + L-cysteine + H2O. The enzyme catalyses indole-3-pyruvate + L-kynurenine = kynurenate + L-tryptophan + H2O. It carries out the reaction 2-oxopentanoate + L-kynurenine = L-2-aminopentanoate + kynurenate + H2O. It catalyses the reaction 4-methyl-2-oxopentanoate + L-kynurenine = kynurenate + L-leucine + H2O. The catalysed reaction is glyoxylate + L-methionine = 4-methylsulfanyl-2-oxobutanoate + glycine. The enzyme catalyses L-2-aminoadipate + glyoxylate = 2-oxoadipate + glycine. It carries out the reaction L-tyrosine + glyoxylate = 3-(4-hydroxyphenyl)pyruvate + glycine. It catalyses the reaction glyoxylate + L-phenylalanine = 3-phenylpyruvate + glycine. The catalysed reaction is L-tryptophan + glyoxylate = indole-3-pyruvate + glycine. The enzyme catalyses L-leucine + glyoxylate = 4-methyl-2-oxopentanoate + glycine. It carries out the reaction 2-oxobutanoate + L-kynurenine = (2S)-2-aminobutanoate + kynurenate + H2O. It catalyses the reaction 2-oxoadipate + L-kynurenine = L-2-aminoadipate + kynurenate + H2O. The catalysed reaction is 2-oxoadipate + L-kynurenine = 4-(2-aminophenyl)-2,4-dioxobutanoate + L-2-aminoadipate. Its pathway is amino-acid degradation; L-lysine degradation via saccharopine pathway; glutaryl-CoA from L-lysine: step 4/6. Transaminase with broad substrate specificity. Has transaminase activity towards aminoadipate, kynurenine, methionine and glutamate. Shows activity also towards tryptophan, aspartate and hydroxykynurenine. Accepts a variety of oxo-acids as amino-group acceptors, with a preference for 2-oxoglutarate, 2-oxocaproic acid, phenylpyruvate and alpha-oxo-gamma-methiol butyric acid. Can also use glyoxylate as amino-group acceptor (in vitro). In Rattus norvegicus (Rat), this protein is Kynurenine/alpha-aminoadipate aminotransferase, mitochondrial.